Consider the following 147-residue polypeptide: MQRTYEVMFIVRPDLTDEDLDKLVSTLETQVGTAGGTIKSVDKMGKRRLAYEVSTFTDGMYILFTIEGEGALIKEVERRLRVQEQVIKFITVRVDEEQKRLAKVKAIRDTKVRGKGTRAAEQAAAAEAAAPAAAPAEPASAEPAPAV.

Positions Gly-114 to Val-147 are disordered. Low complexity predominate over residues Ala-119–Val-147.

Belongs to the bacterial ribosomal protein bS6 family.

Functionally, binds together with bS18 to 16S ribosomal RNA. This is Small ribosomal subunit protein bS6 from Koribacter versatilis (strain Ellin345).